The sequence spans 382 residues: uncharacterized protein (382 aa).

Residues 1–21 (MKIILVVFVLIFVGVIGFNMI) traverse the membrane as a helical segment.

The protein belongs to the membrane fusion protein (MFP) (TC 8.A.1) family.

It localises to the membrane. This is an uncharacterized protein from Haemophilus influenzae (strain ATCC 51907 / DSM 11121 / KW20 / Rd).